A 544-amino-acid chain; its full sequence is MADTPTSRMIHPFSNIPSQNLKQFQYSDNPQHPCHPYRAPSDTHVVPHHYGLKSHSPDAGYESQATPNKYTLDSSEGAGCMRHDSPSSQSFTTRSGSPLSQEDSHSDSTDGSPVGASCVTEDPNDLKQKLKDLEAVMLGPDSEIVNSLENSVANQLSLEPEKWVRMMGIPRGNLKELLIACARAVEEKNSFAIDMMIPELRKIVSVSGEPLERLGAYMVEGLVARLASSGISIYKALKCKEPKSSDLLSYMHFLYEACPYFKFGYMSANGAIAEAVKGEDRIHIIDFHISQGAQWISLLQALAARPGGPPTVRITGIDDSVSAYARGGGLELVGRRLSHIASLCKVPFEFHPLAISGSKVEAAHLGVIPGEALAVNFTLELHHIPDESVSTANHRDRLLRMVKSLSPKVLTLVEMESNTNTAPFPQRFAETLDYYTAIFESIDLTLPRDDRERINMEQHCLAREIVNLIACEGEERAERYEPFGKWKARLTMAGFRPSPLSSLVNATIRTLLQSYSDNYKLAERDGALYLGWKSRPLVVSSAWH.

Positions 1–123 are disordered; the sequence is MADTPTSRMI…VGASCVTEDP (123 aa). Polar residues-rich tracts occupy residues 15 to 30, 63 to 74, and 86 to 101; these read NIPSQNLKQFQYSDNP, SQATPNKYTLDS, and PSSQSFTTRSGSPLSQ. The GRAS domain occupies 165–544; it reads RMMGIPRGNL…RPLVVSSAWH (380 aa). Positions 172–232 are leucine repeat I (LRI); the sequence is GNLKELLIAC…VARLASSGIS (61 aa). Residues 251-316 form a VHIID region; sequence MHFLYEACPY…GGPPTVRITG (66 aa). The VHIID signature appears at 282-286; it reads IHIID. The segment at 332-364 is leucine repeat II (LRII); the sequence is LVGRRLSHIASLCKVPFEFHPLAISGSKVEAAH. Residues 373–467 are PFYRE; that stretch reads LAVNFTLELH…QHCLAREIVN (95 aa). Positions 470-544 are SAW; sequence ACEGEERAER…RPLVVSSAWH (75 aa).

This sequence belongs to the GRAS family.

The protein localises to the nucleus. Its function is as follows. May play a regulatory role in the early step of oligosaccharide elicitor response, downstream of the membrane-associated high-affinity chitin-binding protein. The sequence is that of Chitin-inducible gibberellin-responsive protein 2 (CIGR2) from Oryza sativa subsp. japonica (Rice).